We begin with the raw amino-acid sequence, 396 residues long: Tryptophan synthase beta chain (396 aa).

At K86 the chain carries N6-(pyridoxal phosphate)lysine.

It belongs to the TrpB family. In terms of assembly, tetramer of two alpha and two beta chains. The cofactor is pyridoxal 5'-phosphate.

It catalyses the reaction (1S,2R)-1-C-(indol-3-yl)glycerol 3-phosphate + L-serine = D-glyceraldehyde 3-phosphate + L-tryptophan + H2O. The protein operates within amino-acid biosynthesis; L-tryptophan biosynthesis; L-tryptophan from chorismate: step 5/5. Functionally, the beta subunit is responsible for the synthesis of L-tryptophan from indole and L-serine. The polypeptide is Tryptophan synthase beta chain (Francisella tularensis subsp. tularensis (strain FSC 198)).